We begin with the raw amino-acid sequence, 274 residues long: MQFSKMHGLGNDFVVVDAVTQNVYFPEEVIKKLADRHRGIGFDQMLIVEPPYDPELDFHYRIFNADGSEVAQCGNGARCFARFVTLKGLTDKKDIAVSTTNGKMILTVQDDGMIRVNMGEPVWEPAKIPFIANKFEKNYILRTDIQTVLCGAVSMGNPHCTLVVDDVETANVTELGPLLENHERFPERVNVGFMQVINPNHIKLRVYERGAGETQACGSGACAAAAIGIMQGLLENKVQVDLPGGSLWIEWQGEGHPLYMTGDATHVYDGVIKL.

Residues asparagine 11, glutamine 44, and asparagine 64 each coordinate substrate. Cysteine 73 serves as the catalytic Proton donor. Substrate is bound by residues 74–75, asparagine 157, asparagine 190, and 208–209; these read GN and ER. Residue cysteine 217 is the Proton acceptor of the active site. A substrate-binding site is contributed by 218–219; sequence GS.

The protein belongs to the diaminopimelate epimerase family. Homodimer.

The protein resides in the cytoplasm. The catalysed reaction is (2S,6S)-2,6-diaminopimelate = meso-2,6-diaminopimelate. It participates in amino-acid biosynthesis; L-lysine biosynthesis via DAP pathway; DL-2,6-diaminopimelate from LL-2,6-diaminopimelate: step 1/1. Catalyzes the stereoinversion of LL-2,6-diaminopimelate (L,L-DAP) to meso-diaminopimelate (meso-DAP), a precursor of L-lysine and an essential component of the bacterial peptidoglycan. This chain is Diaminopimelate epimerase, found in Mannheimia succiniciproducens (strain KCTC 0769BP / MBEL55E).